A 512-amino-acid chain; its full sequence is GMP synthase [glutamine-hydrolyzing] (512 aa).

The Glutamine amidotransferase type-1 domain occupies 7–197; that stretch reads LVLVVDFGGQ…LFKVAGLKAD (191 aa). C84 functions as the Nucleophile in the catalytic mechanism. Catalysis depends on residues H171 and E173. The GMPS ATP-PPase domain maps to 198-387; it reads WSMASFAEEK…LGIPHKLVWR (190 aa). 225–231 is a binding site for ATP; that stretch reads SGGVDSS.

In terms of assembly, homodimer.

The catalysed reaction is XMP + L-glutamine + ATP + H2O = GMP + L-glutamate + AMP + diphosphate + 2 H(+). The protein operates within purine metabolism; GMP biosynthesis; GMP from XMP (L-Gln route): step 1/1. Catalyzes the synthesis of GMP from XMP. This is GMP synthase [glutamine-hydrolyzing] from Clostridium novyi (strain NT).